A 156-amino-acid polypeptide reads, in one-letter code: Ribosomal RNA large subunit methyltransferase H (156 aa).

S-adenosyl-L-methionine contacts are provided by residues Leu72, Gly103, and 122–127; that span reads LSSLTL.

The protein belongs to the RNA methyltransferase RlmH family. In terms of assembly, homodimer.

The protein resides in the cytoplasm. The catalysed reaction is pseudouridine(1915) in 23S rRNA + S-adenosyl-L-methionine = N(3)-methylpseudouridine(1915) in 23S rRNA + S-adenosyl-L-homocysteine + H(+). Specifically methylates the pseudouridine at position 1915 (m3Psi1915) in 23S rRNA. The chain is Ribosomal RNA large subunit methyltransferase H from Dechloromonas aromatica (strain RCB).